Consider the following 132-residue polypeptide: Small ribosomal subunit protein uS8c (132 aa).

Belongs to the universal ribosomal protein uS8 family. In terms of assembly, part of the 30S ribosomal subunit.

The protein localises to the plastid. It is found in the chloroplast. Its function is as follows. One of the primary rRNA binding proteins, it binds directly to 16S rRNA central domain where it helps coordinate assembly of the platform of the 30S subunit. The chain is Small ribosomal subunit protein uS8c (rps8) from Liriodendron tulipifera (Tuliptree).